Here is a 33-residue protein sequence, read N- to C-terminus: Protamine-1B (33 aa).

Residues 1–33 (PRRRRRRSSSRPIRRRRPRRVSRRRRRGGRRRR) are disordered.

In terms of tissue distribution, testis.

The protein localises to the nucleus. It localises to the chromosome. Protamines substitute for histones in the chromatin of sperm during the haploid phase of spermatogenesis. They compact sperm DNA into a highly condensed, stable and inactive complex. The protein is Protamine-1B of Oncorhynchus mykiss (Rainbow trout).